Reading from the N-terminus, the 91-residue chain is DNA-directed RNA polymerase subunit omega (91 aa).

Belongs to the RNA polymerase subunit omega family. In terms of assembly, the RNAP catalytic core consists of 2 alpha, 1 beta, 1 beta' and 1 omega subunit. When a sigma factor is associated with the core the holoenzyme is formed, which can initiate transcription.

The catalysed reaction is RNA(n) + a ribonucleoside 5'-triphosphate = RNA(n+1) + diphosphate. Its function is as follows. Promotes RNA polymerase assembly. Latches the N- and C-terminal regions of the beta' subunit thereby facilitating its interaction with the beta and alpha subunits. In Sodalis glossinidius (strain morsitans), this protein is DNA-directed RNA polymerase subunit omega.